The primary structure comprises 148 residues: Small ribosomal subunit protein bS16 (148 aa).

Residues 111-122 show a composition bias toward low complexity; sequence AAAGEEPVAEAT. Residues 111-148 are disordered; the sequence is AAAGEEPVAEATTPKKKGGKKAEAEDKAEEQKSEEGQA. The span at 130–148 shows a compositional bias: basic and acidic residues; sequence KKAEAEDKAEEQKSEEGQA.

Belongs to the bacterial ribosomal protein bS16 family.

This is Small ribosomal subunit protein bS16 from Saccharopolyspora erythraea (strain ATCC 11635 / DSM 40517 / JCM 4748 / NBRC 13426 / NCIMB 8594 / NRRL 2338).